Consider the following 186-residue polypeptide: UPF0200 protein PF1294 (186 aa).

7 to 14 (GMPGSGKG) contributes to the ATP binding site.

This sequence belongs to the UPF0200 family.

In Pyrococcus furiosus (strain ATCC 43587 / DSM 3638 / JCM 8422 / Vc1), this protein is UPF0200 protein PF1294.